Here is a 304-residue protein sequence, read N- to C-terminus: PTB domain-containing engulfment adapter protein 1 (304 aa).

Thr16 carries the post-translational modification Phosphothreonine. The PID domain occupies 21–176 (SKHFIPYNAK…AGLQKRIQDL (156 aa)). Residues 158-202 (KDVETRKQIAGLQKRIQDLETENMELKNKVQDLENQLRITQVSAP) are a coiled coil. Ser223 is modified (phosphoserine). The segment at 223–246 (SPISHQSSMPTRNGTQPPPVPSRS) is disordered. A compositionally biased stretch (polar residues) spans 225–237 (ISHQSSMPTRNGT).

Belongs to the ced-6 family. As to quaternary structure, homodimer. Interacts with clathrin. Interacts with GDP-bound ARF6, but not with GTP-bound ARF6. Part of a complex composed of GULP1, ACAP1 and ARF6. Interacts with ACAP1, LRP1, MEGF10 and STAB2. Widely expressed. Detected in macrophages, pancreas, kidney, skeletal muscle, heart, colon, intestine, lung, placenta and ovary.

It localises to the cytoplasm. Functionally, may function as an adapter protein. Required for efficient phagocytosis of apoptotic cells. Modulates cellular glycosphingolipid and cholesterol transport. May play a role in the internalization and endosomal trafficking of various LRP1 ligands, such as PSAP. Increases cellular levels of GTP-bound ARF6. In Homo sapiens (Human), this protein is PTB domain-containing engulfment adapter protein 1 (GULP1).